The sequence spans 497 residues: MPYILSIDQGTTSSRAIVFDANGHACGQAQKEFRQYFPEDGWVEHDAMEIWNDTLAMCQQALRNARVEAQQLVAIGITNQRETTVLWDRETGDPLARAIVWQDRRTASTCEALRDQGHENQVRSKTGLLLDPYFSATKLAWLLDNVPNARQRAEAGELAFGTIDSWLLWQLTRGKVHATDATNASRTLLFNIHEQCWDEELLTLFNVPASVLPDVRDSAADFGTTCPELLGAAVPVTGIAGDQQAALVGQACFAPGMVKSTYGTGCFMVMNTGEAVESHNRLLTTVGYRLNGKTTYALEGSIFVAGAAIQWLRDGLHLIRDARETEALARRVGSAGGVYLVPAFTGLGAPWWDPHARGALMGLTRDTGIAEVVTAGLEAVCYQSRDLLDAMAADCGTRPTTLRVDGGMVVNNWLSQTLSDVLGVCVDRPVVTETTALGAAYLAGLGVGLYASLESIAEQWRCERGFSPALAEPERQKRYQGWRDAVARVCQTSRGAN.

Thr-11 contacts ADP. ATP is bound by residues Thr-11, Thr-12, and Ser-13. Sn-glycerol 3-phosphate is bound at residue Thr-11. Arg-15 lines the ADP pocket. 4 residues coordinate sn-glycerol 3-phosphate: Arg-81, Glu-82, Tyr-133, and Asp-242. Positions 81, 82, 133, 242, and 243 each coordinate glycerol. 2 residues coordinate ADP: Thr-264 and Gly-306. Residues Thr-264, Gly-306, Gln-310, and Gly-407 each coordinate ATP. Residues Gly-407 and Asn-411 each contribute to the ADP site.

The protein belongs to the FGGY kinase family.

It catalyses the reaction glycerol + ATP = sn-glycerol 3-phosphate + ADP + H(+). The protein operates within polyol metabolism; glycerol degradation via glycerol kinase pathway; sn-glycerol 3-phosphate from glycerol: step 1/1. Inhibited by fructose 1,6-bisphosphate (FBP). Key enzyme in the regulation of glycerol uptake and metabolism. Catalyzes the phosphorylation of glycerol to yield sn-glycerol 3-phosphate. This is Glycerol kinase from Alcanivorax borkumensis (strain ATCC 700651 / DSM 11573 / NCIMB 13689 / SK2).